Consider the following 369-residue polypeptide: Protein VP6 (369 aa).

The tract at residues 20–208 (LEQRSIAPLL…EEAKVGGGDR (189 aa)) is disordered. Basic and acidic residues predominate over residues 29–66 (LREKNSTEAKSKLKEDGEKKNKSEKEENKIHDDRRVES). 2 stretches are compositionally biased toward gly residues: residues 92-111 (TGGGDGGAGARTGIGGGGVG) and 162-171 (TSGGLQGRGG). Basic and acidic residues predominate over residues 196–208 (TEGEEAKVGGGDR).

The protein belongs to the orbivirus VP6 family.

It localises to the virion. In African horse sickness virus 3 (AHSV-3), this protein is Protein VP6 (S9).